The sequence spans 483 residues: Aspartyl/glutamyl-tRNA(Asn/Gln) amidotransferase subunit B (483 aa).

The protein belongs to the GatB/GatE family. GatB subfamily. In terms of assembly, heterotrimer of A, B and C subunits.

It catalyses the reaction L-glutamyl-tRNA(Gln) + L-glutamine + ATP + H2O = L-glutaminyl-tRNA(Gln) + L-glutamate + ADP + phosphate + H(+). The enzyme catalyses L-aspartyl-tRNA(Asn) + L-glutamine + ATP + H2O = L-asparaginyl-tRNA(Asn) + L-glutamate + ADP + phosphate + 2 H(+). In terms of biological role, allows the formation of correctly charged Asn-tRNA(Asn) or Gln-tRNA(Gln) through the transamidation of misacylated Asp-tRNA(Asn) or Glu-tRNA(Gln) in organisms which lack either or both of asparaginyl-tRNA or glutaminyl-tRNA synthetases. The reaction takes place in the presence of glutamine and ATP through an activated phospho-Asp-tRNA(Asn) or phospho-Glu-tRNA(Gln). The polypeptide is Aspartyl/glutamyl-tRNA(Asn/Gln) amidotransferase subunit B (Thermomicrobium roseum (strain ATCC 27502 / DSM 5159 / P-2)).